The sequence spans 181 residues: UPF0302 protein lmo1921 (181 aa).

Belongs to the UPF0302 family.

The polypeptide is UPF0302 protein lmo1921 (Listeria monocytogenes serovar 1/2a (strain ATCC BAA-679 / EGD-e)).